The primary structure comprises 495 residues: Cytochrome P450 monooxygenase 113 (495 aa).

A helical transmembrane segment spans residues 2-22 (FLQIAACFTVIGLLYGLVSNL). C428 lines the heme pocket.

It belongs to the cytochrome P450 family. Requires heme as cofactor.

It is found in the membrane. It participates in secondary metabolite biosynthesis. Its function is as follows. Cytochrome P450 monooxygenase that is able to use 4-ethoxybenzoic acid as a substrate for oxidation. The polypeptide is Cytochrome P450 monooxygenase 113 (Postia placenta (strain ATCC 44394 / Madison 698-R) (Brown rot fungus)).